The sequence spans 543 residues: MAKDIKFSADARAAMVRGVDMLADTVKVTLGPKGRNVVLEKAFGSPLITNDGVTIAKEIELEDHFENMGAKLVSEVASKTNDIAGDGTTTATVLTQAIVHEGLKNVTAGANPIGIRRGIETATATAVEALKAIAQPVSGKEAIAQVAAVSSRSEKVGEYISEAMERVGNDGVITIEESRGMETELEVVEGMQFDRGYLSQYMVTDNEKMVADLENPFILITDKKVSNIQDILPLLEEVLKTNRPLLIIADDVDGEALPTLVLNKIRGTFNVVAVKAPGFGDRRKAMLEDIAILTGGTVITEDLGLELKDATMTALGQAAKITVDKDSTVIVEGSGSSEAIANRIALIKSQLETTTSDFDREKLQERLAKLAGGVAVIKVGAPTETALKEMKLRIEDALNATRAAVEEGIVAGGGTALITVIEKVAALELEGDDATGRNIVLRALEEPVRQIALNAGYEGSVIIDKLKNSPAGTGFNAATGEWVDMIKTGIIDPVKVTRSALQNAASVASLILTTEAVVANKPEPAAPAPAMPAGMDPGMMGGF.

Residues 29 to 32, 86 to 90, Gly413, 476 to 478, and Asp492 contribute to the ATP site; these read TLGP, DGTTT, and NAA.

The protein belongs to the chaperonin (HSP60) family. In terms of assembly, forms a cylinder of 14 subunits composed of two heptameric rings stacked back-to-back. Interacts with the co-chaperonin GroES.

The protein resides in the cytoplasm. It catalyses the reaction ATP + H2O + a folded polypeptide = ADP + phosphate + an unfolded polypeptide.. Its function is as follows. Together with its co-chaperonin GroES, plays an essential role in assisting protein folding. The GroEL-GroES system forms a nano-cage that allows encapsulation of the non-native substrate proteins and provides a physical environment optimized to promote and accelerate protein folding. This Streptococcus pyogenes serotype M18 (strain MGAS8232) protein is Chaperonin GroEL.